We begin with the raw amino-acid sequence, 249 residues long: E3 ubiquitin-protein ligase RMA1 (249 aa).

Residues 48–97 (CNICLDSVQEPVVTLCGHLFCWPCIHKWLDVQSFSTSDEYQRHRQCPVCK) form an RING-type zinc finger. Residues 231-248 (LGRIFFFFMCCVVLCLLL) traverse the membrane as a helical; Anchor for type IV membrane protein segment.

As to expression, ubiquitous. Highly expressed in roots.

Its subcellular location is the endoplasmic reticulum membrane. It carries out the reaction S-ubiquitinyl-[E2 ubiquitin-conjugating enzyme]-L-cysteine + [acceptor protein]-L-lysine = [E2 ubiquitin-conjugating enzyme]-L-cysteine + N(6)-ubiquitinyl-[acceptor protein]-L-lysine.. It participates in protein modification; protein ubiquitination. Its function is as follows. E3 ubiquitin-protein ligase that promotes the ubiquitination and proteasomal degradation of aquaporin PIP2-1. Forms a ubiquitin ligase complex in cooperation with the E2 enzymes UCB8/UCB10. The chain is E3 ubiquitin-protein ligase RMA1 (RMA1) from Arabidopsis thaliana (Mouse-ear cress).